We begin with the raw amino-acid sequence, 166 residues long: UBA-like domain-containing protein 2-A (166 aa).

The segment at 120-166 is disordered; the sequence is QQPVWLPPASPTTHLHHHHHHPQPVWPPNSQPTGGPQKAMAAMDGQR.

This sequence belongs to the UBALD family.

In Xenopus laevis (African clawed frog), this protein is UBA-like domain-containing protein 2-A (ubald2-a).